Here is a 208-residue protein sequence, read N- to C-terminus: Urease accessory protein UreG (208 aa).

10-17 (GPVGSGKT) provides a ligand contact to GTP.

Belongs to the SIMIBI class G3E GTPase family. UreG subfamily. Homodimer. UreD, UreF and UreG form a complex that acts as a GTP-hydrolysis-dependent molecular chaperone, activating the urease apoprotein by helping to assemble the nickel containing metallocenter of UreC. The UreE protein probably delivers the nickel.

Its subcellular location is the cytoplasm. In terms of biological role, facilitates the functional incorporation of the urease nickel metallocenter. This process requires GTP hydrolysis, probably effectuated by UreG. This is Urease accessory protein UreG from Halalkalibacterium halodurans (strain ATCC BAA-125 / DSM 18197 / FERM 7344 / JCM 9153 / C-125) (Bacillus halodurans).